The sequence spans 291 residues: Porphobilinogen deaminase (291 aa).

Cys237 carries the S-(dipyrrolylmethanemethyl)cysteine modification.

It belongs to the HMBS family. Monomer. Dipyrromethane is required as a cofactor.

It catalyses the reaction 4 porphobilinogen + H2O = hydroxymethylbilane + 4 NH4(+). Its pathway is porphyrin-containing compound metabolism; protoporphyrin-IX biosynthesis; coproporphyrinogen-III from 5-aminolevulinate: step 2/4. Tetrapolymerization of the monopyrrole PBG into the hydroxymethylbilane pre-uroporphyrinogen in several discrete steps. The polypeptide is Porphobilinogen deaminase (Clostridium perfringens (strain ATCC 13124 / DSM 756 / JCM 1290 / NCIMB 6125 / NCTC 8237 / Type A)).